The primary structure comprises 507 residues: Inactive alanine aminotransferase (507 aa).

Ala173, Ser174, Tyr199, Asn255, and Ser324 together coordinate pyridoxal 5'-phosphate. An N6-(pyridoxal phosphate)lysine modification is found at Lys327. Residue Arg336 participates in pyridoxal 5'-phosphate binding.

This sequence belongs to the class-I pyridoxal-phosphate-dependent aminotransferase family. Alanine aminotransferase subfamily. In terms of assembly, homodimer. The cofactor is pyridoxal 5'-phosphate.

The protein resides in the cytoplasm. The protein localises to the nucleus. In terms of biological role, inactive alanine aminotransferase. Forms a catalytically active Schiff base with PLP, but lacks alanine transaminase activity, probably due to an altered structural conformation of the dimeric enzyme. This suggests this protein may have a yet undiscovered physiological function. This is Inactive alanine aminotransferase (ALT2) from Saccharomyces cerevisiae (strain ATCC 204508 / S288c) (Baker's yeast).